A 489-amino-acid chain; its full sequence is Cysteine--tRNA ligase (489 aa).

Cysteine 29 lines the Zn(2+) pocket. The 'HIGH' region signature appears at 31 to 41; sequence VTVYDYCHLGH. Residues cysteine 215, histidine 240, and glutamate 244 each coordinate Zn(2+). A 'KMSKS' region motif is present at residues 272–276; sequence KMSKS. ATP is bound at residue lysine 275.

It belongs to the class-I aminoacyl-tRNA synthetase family. Monomer. It depends on Zn(2+) as a cofactor.

It is found in the cytoplasm. The enzyme catalyses tRNA(Cys) + L-cysteine + ATP = L-cysteinyl-tRNA(Cys) + AMP + diphosphate. The sequence is that of Cysteine--tRNA ligase from Trichodesmium erythraeum (strain IMS101).